Reading from the N-terminus, the 57-residue chain is Potassium channel toxin alpha-KTx 8.8 (57 aa).

The first 19 residues, 1 to 19 (MCRLYAIILIVLVMNVIMT), serve as a signal peptide directing secretion. The propeptide occupies 20–28 (IIPDSKVEV). 3 cysteine pairs are disulfide-bonded: cysteine 31–cysteine 47, cysteine 34–cysteine 52, and cysteine 38–cysteine 54.

The protein belongs to the short scorpion toxin superfamily. Potassium channel inhibitor family. Alpha-KTx 08 subfamily. In terms of processing, contains 3 disulfide bonds. As to expression, expressed by the venom gland.

It is found in the secreted. Functionally, selectively inhibits voltage-gated potassium channels rKv1.2/KCNA2 (IC(50)=331 nM) and hKv1.3/KCNA3 (IC(50)=503 nM). Partially inihibts rKv1.6/KCNA6 (IC(50)=9983 nM). The polypeptide is Potassium channel toxin alpha-KTx 8.8 (Orthochirus scrobiculosus (Central Asian scorpion)).